A 204-amino-acid chain; its full sequence is General odorant-binding protein 67 (204 aa).

Positions 1–22 (MNPVVCAFGVIFVVVTLELVVA) are cleaved as a signal peptide. Intrachain disulfides connect cysteine 57–cysteine 85, cysteine 81–cysteine 147, and cysteine 128–cysteine 157.

Belongs to the PBP/GOBP family.

The protein resides in the secreted. Functionally, present in the aqueous fluid surrounding olfactory sensory dendrites and are thought to aid in the capture and transport of hydrophobic odorants into and through this fluid. The protein is General odorant-binding protein 67 (Obp67) of Anopheles gambiae (African malaria mosquito).